The sequence spans 439 residues: Potassium/proton antiporter CemA (439 aa).

Transmembrane regions (helical) follow at residues 55-75, 79-99, 220-240, 317-337, 364-384, and 399-419; these read IMLY…WSLL, ISLF…NFFN, YMLF…IWFL, LLHL…FILG, ILLL…EIVI, and IISC…KYWI.

Belongs to the CemA family.

It localises to the plastid. Its subcellular location is the chloroplast inner membrane. The enzyme catalyses K(+)(in) + H(+)(out) = K(+)(out) + H(+)(in). Its function is as follows. Contributes to K(+)/H(+) antiport activity by supporting proton efflux to control proton extrusion and homeostasis in chloroplasts in a light-dependent manner to modulate photosynthesis. Prevents excessive induction of non-photochemical quenching (NPQ) under continuous-light conditions. Indirectly promotes efficient inorganic carbon uptake into chloroplasts. This is Potassium/proton antiporter CemA from Physcomitrium patens (Spreading-leaved earth moss).